We begin with the raw amino-acid sequence, 250 residues long: HLA class II histocompatibility antigen, DO alpha chain (250 aa).

A signal peptide spans 1-25; the sequence is MALRAGLVLGFHTLMTLLSPQEAGA. The segment at 26 to 110 is alpha-1; that stretch reads TKADHMGSYG…ERSNRSRAIN (85 aa). Residues 26–217 lie on the Extracellular side of the membrane; the sequence is TKADHMGSYG…VPIPPPDAME (192 aa). N-linked (GlcNAc...) asparagine glycans are attached at residues asparagine 104 and asparagine 144. An alpha-2 region spans residues 111 to 204; that stretch reads VPPRVTVLPK…GLDAPLLRHW (94 aa). In terms of domain architecture, Ig-like C1-type spans 113 to 205; the sequence is PRVTVLPKSR…LDAPLLRHWE (93 aa). Residues cysteine 133 and cysteine 189 are joined by a disulfide bond. The connecting peptide stretch occupies residues 205 to 217; that stretch reads ELQVPIPPPDAME. A helical membrane pass occupies residues 218–240; the sequence is TLVCALGLAIGLVGFLVGTVLII. At 241–250 the chain is on the cytoplasmic side; it reads MGTYVSSVPR.

The protein belongs to the MHC class II family. As to quaternary structure, heterodimer of an alpha chain (DOA) and a beta chain (DOB). Forms a heterotetrameric complex with an HLA-DM molecule during intracellular transport in endosomal/lysosomal compartments in B-cells.

Its subcellular location is the endosome membrane. It is found in the lysosome membrane. In terms of biological role, important modulator in the HLA class II restricted antigen presentation pathway by interaction with the HLA-DM molecule in B-cells. Modifies peptide exchange activity of HLA-DM. The polypeptide is HLA class II histocompatibility antigen, DO alpha chain (HLA-DOA) (Homo sapiens (Human)).